Consider the following 120-residue polypeptide: MAKDLEALARRKAKVRRAIRVAANGRPRLSVHRTSQHIYAQVIDDANGETLAAASSLEKDLRTSLKTGADTDAAKTIGKLVAERALAKGVTAVVFDRGAYIFHGRVKALAEGAREGGLQF.

This sequence belongs to the universal ribosomal protein uL18 family. Part of the 50S ribosomal subunit; part of the 5S rRNA/L5/L18/L25 subcomplex. Contacts the 5S and 23S rRNAs.

Its function is as follows. This is one of the proteins that bind and probably mediate the attachment of the 5S RNA into the large ribosomal subunit, where it forms part of the central protuberance. The chain is Large ribosomal subunit protein uL18 from Xanthobacter autotrophicus (strain ATCC BAA-1158 / Py2).